The chain runs to 443 residues: FAD-dependent monooxygenase orf3 (443 aa).

The chain crosses the membrane as a helical span at residues 5-25 (SIEVAIIGAGITGITLALGLL). The FAD site is built by Glu35 and Gly48. Residues Asn75 and Asn87 are each glycosylated (N-linked (GlcNAc...) asparagine). Residue Arg116 coordinates FAD. The active site involves Arg199. FAD-binding residues include Asp315 and Ala328.

It belongs to the paxM FAD-dependent monooxygenase family. It depends on FAD as a cofactor.

It localises to the membrane. Its pathway is secondary metabolite biosynthesis. Functionally, FAD-dependent monooxygenase; part of the gene cluster that mediates the biosynthesis of nigerpyrone and its derivatives carbonarone A and pestalamide A. The biosynthesis pathway begins with the polyketide assembly by epaA to form phenylacetyl triketide precursor from successive condensation of two malonyl-CoA, presumably with one phenylacetyl-CoA starter unit produced by the phenylacetyl-CoA ligase epaB. For the nigerpyrone biosynthesis, the reactive polyketide chain is released as an aldehyde through the R-domain. A nonenzymatic cyclization and dehydration may create nigerpyrone. For the biosynthesis of carbonarone A and pestalamide A, an extra methyl group is added through the C-methyltransferase domain. Several further steps involving the dehydrogenase orf1, the cytochrome P450 monooxygenase orf2 and the FAD-dependent monooxygenase orf3 are required to form a carbonarone A precursor which is converted to carbonarone A via cyclization. The O-acetyltransferase epaC could catalyze the transfer of 2-methylsuccinyl-CoA, a common intermediate in the ethylmalonyl-CoA pathway, to generate the final product pestalamide A. This Aspergillus niger (strain ATCC MYA-4892 / CBS 513.88 / FGSC A1513) protein is FAD-dependent monooxygenase orf3.